The sequence spans 641 residues: WW domain-binding protein 11 (641 aa).

The segment covering 1–11 (MGRRSTSSTKS) has biased composition (polar residues). A disordered region spans residues 1–37 (MGRRSTSSTKSGKFMNPTDQARKEARKRELKKNKKQR). Residues 1-45 (MGRRSTSSTKSGKFMNPTDQARKEARKRELKKNKKQRMMVRAAVL) are required for nuclear import. Lys13 carries the N6-acetyllysine modification. Residues 28–37 (RELKKNKKQR) show a composition bias toward basic residues. Positions 75-133 (EKVLKDKRKKLRETFERILRLYEKENPDIYKELRKLEVEYEQKRAQLSQYFDAVKNAQH) form a coiled coil. Position 181 is a phosphoserine (Ser181). The tract at residues 188–213 (HGVPRLPPGRKPPGPPPGPPPPQVLQ) is disordered. Arg192 bears the Omega-N-methylarginine mark. A compositionally biased stretch (pro residues) spans 192–210 (RLPPGRKPPGPPPGPPPPQ). An interaction with PP1 region spans residues 217–221 (RKVGF). Tyr236 carries the phosphotyrosine modification. A disordered region spans residues 236 to 550 (YSPELAQRGH…IQRPKADDAS (315 aa)). Ser237 carries the phosphoserine modification. Residues 253 to 263 (SEDDGYPEDMD) are compositionally biased toward acidic residues. Positions 276-304 (TDRSDAESDGDEFGHREDSERDNTEEKKS) are enriched in basic and acidic residues. Residues Ser279 and Ser283 each carry the phosphoserine modification. Positions 306-310 (LSVRF) are interaction with PP1. The segment covering 351–365 (EFSEEEDADDSDDSE) has biased composition (acidic residues). 3 positions are modified to phosphoserine: Ser353, Ser361, and Ser364. Residues 366–380 (AEKQSQKQHKDDGHS) are compositionally biased toward basic and acidic residues. Positions 381–404 (DSTAAASSQQQAPPQSAPASQIQA) are enriched in low complexity. Pro residues-rich tracts occupy residues 405–447 (PPMP…PPGM), 456–504 (RLLP…PPRP), and 510–530 (PLVPPLGPAPPGLFPPAPLPN). The PGR signature appears at 455-466 (PRLLPPGPPPGR). Lys557 is covalently cross-linked (Glycyl lysine isopeptide (Lys-Gly) (interchain with G-Cter in SUMO2)). Lys565 carries the N6-acetyllysine modification. A Glycyl lysine isopeptide (Lys-Gly) (interchain with G-Cter in SUMO2) cross-link involves residue Lys572. The disordered stretch occupies residues 588–620 (ENKGATAVPQRRSEDDSAVPVAKAAPRSGPSVA). Ser600 carries the post-translational modification Phosphoserine. The required for nuclear export stretch occupies residues 633–641 (FMKEMEGLL).

Interacts via the PGR motif with PQBP1 in the nucleus. Interacts with the WW domains of WBP4. Interacts with PPP1CA, PPP1CB and PPP1CC. In terms of tissue distribution, ubiquitously expressed, with highest levels in testis.

The protein resides in the nucleus. The protein localises to the cytoplasm. Activates pre-mRNA splicing. May inhibit PP1 phosphatase activity. The sequence is that of WW domain-binding protein 11 (Wbp11) from Mus musculus (Mouse).